Here is a 510-residue protein sequence, read N- to C-terminus: Probable sphingolipid transporter spinster homolog 3 (510 aa).

The chain crosses the membrane as a helical span at residues 44–64; the sequence is SSLSPVWLLVIFCIINLLNYM. Asparagine 75 and asparagine 98 each carry an N-linked (GlcNAc...) asparagine glycan. 11 helical membrane-spanning segments follow: residues 106–126, 136–156, 158–178, 185–205, 219–239, 298–318, 336–356, 369–387, 392–414, 430–450, and 462–482; these read VLSSSFMVGLLIASPIFASLA, VWTIAVLGCGSSFAFWFIVLC, MFVGVGEASFISLAAPFIDDN, AAWLGLFYMCIPSGVALGYVY, FWGEAVLMAPFAVLGFLMKPL, VFVVNVLGYVSYNFVIGAYSY, IFGAVTIICGIVGTLSGGFIL, LLSGATFLGAVFCFTAFTL, GFIALFALGELLVFATQAPVNYV, ISTVAIHIFGDVPSSPLVGIV, and LILTSILFLAAAIWFIGKINL.

The protein belongs to the major facilitator superfamily. Spinster (TC 2.A.1.49) family.

It localises to the mitochondrion inner membrane. Functionally, probable sphingolipid transporter. In Arabidopsis thaliana (Mouse-ear cress), this protein is Probable sphingolipid transporter spinster homolog 3.